The chain runs to 159 residues: 2-C-methyl-D-erythritol 2,4-cyclodiphosphate synthase (159 aa).

A divalent metal cation is bound by residues Asp10 and His12. Residues 10–12 (DVH) and 36–37 (HS) each bind 4-CDP-2-C-methyl-D-erythritol 2-phosphate. Residue His44 coordinates a divalent metal cation. 4-CDP-2-C-methyl-D-erythritol 2-phosphate contacts are provided by residues 58–60 (DIG), 63–67 (FPDTD), 102–108 (AQVPKMA), 134–137 (TTTE), Phe141, and Arg144.

It belongs to the IspF family. Homotrimer. A divalent metal cation is required as a cofactor.

The enzyme catalyses 4-CDP-2-C-methyl-D-erythritol 2-phosphate = 2-C-methyl-D-erythritol 2,4-cyclic diphosphate + CMP. It participates in isoprenoid biosynthesis; isopentenyl diphosphate biosynthesis via DXP pathway; isopentenyl diphosphate from 1-deoxy-D-xylulose 5-phosphate: step 4/6. Its function is as follows. Involved in the biosynthesis of isopentenyl diphosphate (IPP) and dimethylallyl diphosphate (DMAPP), two major building blocks of isoprenoid compounds. Catalyzes the conversion of 4-diphosphocytidyl-2-C-methyl-D-erythritol 2-phosphate (CDP-ME2P) to 2-C-methyl-D-erythritol 2,4-cyclodiphosphate (ME-CPP) with a corresponding release of cytidine 5-monophosphate (CMP). This Shewanella woodyi (strain ATCC 51908 / MS32) protein is 2-C-methyl-D-erythritol 2,4-cyclodiphosphate synthase.